The primary structure comprises 266 residues: Large ribosomal subunit protein eL8 (266 aa).

The span at 1 to 11 (MPKGKKAKGKK) shows a compositional bias: basic residues. Disordered stretches follow at residues 1 to 28 (MPKG…KKVV) and 105 to 134 (ETKQ…KRPP). A compositionally biased stretch (basic and acidic residues) spans 116–130 (ARAEQKAAGKGDAPT).

The protein belongs to the eukaryotic ribosomal protein eL8 family. As to quaternary structure, component of the large ribosomal subunit.

The protein localises to the cytoplasm. In terms of biological role, component of the large ribosomal subunit. The ribosome is a large ribonucleoprotein complex responsible for the synthesis of proteins in the cell. The polypeptide is Large ribosomal subunit protein eL8 (rpl7a) (Takifugu rubripes (Japanese pufferfish)).